Reading from the N-terminus, the 1201-residue chain is Putative disease resistance protein At4g19050 (1201 aa).

Residue G33–T40 coordinates ATP. LRR repeat units follow at residues K469–Q491, G492–N514, Q517–S539, M540–T562, E680–V701, N703–T725, H726–M748, Y750–L771, N773–T795, N796–L818, C820–L841, N843–T865, H866–M888, and Y890–S911. Basic and acidic residues predominate over residues D1162 to H1180. The tract at residues D1162–V1201 is disordered. A compositionally biased stretch (polar residues) spans G1185–V1201.

This sequence belongs to the disease resistance NB-LRR family.

In terms of biological role, potential disease resistance protein. The protein is Putative disease resistance protein At4g19050 of Arabidopsis thaliana (Mouse-ear cress).